A 530-amino-acid chain; its full sequence is Meiosis 1 arrest protein (530 aa).

A disordered region spans residues 463-530 (LHPHWESRAP…SEWEKDPSRP (68 aa)). A compositionally biased stretch (low complexity) spans 503–516 (ASKMPAASKSSSDA).

The protein resides in the cytoplasm. Functionally, required for meiosis I progression during spermatogenesis. In Homo sapiens (Human), this protein is Meiosis 1 arrest protein (M1AP).